Reading from the N-terminus, the 363-residue chain is Protein-arginine kinase (363 aa).

Residues 24–254 enclose the Phosphagen kinase C-terminal domain; it reads IVLSSRIRLA…AQLIEQERSA (231 aa). ATP-binding positions include 27 to 31, His92, Arg125, 176 to 180, and 207 to 212; these read SSRIR, RASVM, and RGIYGE. Residues 337 to 342 carry the RDXXRA motif of the pArg binding pocket involved in allosteric regulation motif; it reads RDARRA.

This sequence belongs to the ATP:guanido phosphotransferase family.

The enzyme catalyses L-arginyl-[protein] + ATP = N(omega)-phospho-L-arginyl-[protein] + ADP + H(+). With respect to regulation, appears to be allosterically activated by the binding of pArg-containing polypeptides to the pArg-binding pocket localized in the C-terminal domain of McsB. Functionally, catalyzes the specific phosphorylation of arginine residues in a large number of proteins. Is part of the bacterial stress response system. Protein arginine phosphorylation has a physiologically important role and is involved in the regulation of many critical cellular processes, such as protein homeostasis, motility, competence, and stringent and stress responses, by regulating gene expression and protein activity. This is Protein-arginine kinase from Bacillus velezensis (strain DSM 23117 / BGSC 10A6 / LMG 26770 / FZB42) (Bacillus amyloliquefaciens subsp. plantarum).